Consider the following 181-residue polypeptide: Urease accessory protein UreE (181 aa).

Residues 143 to 181 are disordered; sequence FDPEPGAYNQAGQGHSHGHSHGHSHNHDHEHSHGHKHAH.

Belongs to the UreE family.

Its subcellular location is the cytoplasm. Involved in urease metallocenter assembly. Binds nickel. Probably functions as a nickel donor during metallocenter assembly. This Marinobacter nauticus (strain ATCC 700491 / DSM 11845 / VT8) (Marinobacter aquaeolei) protein is Urease accessory protein UreE.